We begin with the raw amino-acid sequence, 632 residues long: MSSQEASKMLRTYNIAWWGNNYYDVNELGHISVCPDPDVPEARVDLAELVKAREAQGQRLPALFCFPQILQHRLRSINAAFKRARESYGYNGDYFLVYPIKVNQHRRVIESLIHSGEPLGLEAGSKAELMAVLAHAGMTRSVIVCNGYKDREYIRLALVGEKMGHKVYLVIEKMSEIAIVLEEAERLNVVPRLGVRARLASQGSGKWQSSGGEKSKFGLAATQVLQLVEILRAAGHLESLQLLHFHLGSQMANIRDIATGVRESARFYVELHKLGVNIQCFDVGGGLGVDYEGTRSQSDCSVNYGLNEYANNIIWAIGDACEENGLPHPTVITESGRAVTAHHTVLVSNIIGVERNEYTEATPPAEDAARPLQSMWETWLEMHETGNRRSLREWLHDSQMDLHDIHIGYSSGTFNLQERAWAEQLYLNMCHEVQKQLDPSNRAHRPIIDELQERMADKIYVNFSLFQSMPDAWGIDQLFPVMPLEGLNKSPERRAVLLDITCDSDGAIDHYVDGDGIATTMPMPEYDPENPPMLGFFMVGAYQEILGNMHNLFGDTEAVDVFVFPDGSVEVELSDEGDTVADMLQYVQLDPNTLLTQFRDQVKNTGLDDALQQQFLEEFEAGLYGYTYLEDE.

Position 101 is an N6-(pyridoxal phosphate)lysine (Lys101). 281–291 contributes to the substrate binding site; the sequence is FDVGGGLGVDY.

Belongs to the Orn/Lys/Arg decarboxylase class-II family. SpeA subfamily. Mg(2+) is required as a cofactor. Pyridoxal 5'-phosphate serves as cofactor.

The catalysed reaction is L-arginine + H(+) = agmatine + CO2. It functions in the pathway amine and polyamine biosynthesis; agmatine biosynthesis; agmatine from L-arginine: step 1/1. In terms of biological role, catalyzes the biosynthesis of agmatine from arginine. This chain is Biosynthetic arginine decarboxylase, found in Klebsiella pneumoniae (strain 342).